A 592-amino-acid chain; its full sequence is MDLKTGRVVKVSGPLVVAEGMEEANLFDVVRVGDERLIGEIIEMREDKASIQVYEETSGLGPGAPVVTTGAPLSVELGPGLIEAMFDGIQRPLDAIEAKAGDFITRGIDVPSLSREKVWHFNPTKKAGDKVETGDILGLVQETSVIEHRIMVPPGIKGEIISLNEGDYTVIDKIGEIKTDKGIEDLTLMQKWPVRRGRPYKRKLNPSAPMVTGQRVVDTFFPVTKGGTACVPGPFGSGKTVVQHQLAKWADAQIVVYIGCGERGNEMTDVLNEFPELKDPKTGESLMKRTVLIANTSNMPVAAREASIYTGITIGEYFRDMGYSIALMADSTSRWAEALREMSGRLEEMPGEEGYPAYLGSRLAEFYERAGNVICLGQDGREGALTAIGAVSPPGGDLSEPVTQATLRIVKVFWGLDSQLAYRRHFPAINWLNSYSLYLDKVGPWMNENVAEDWVELRQKAMALLQEEANLQEIARLVGIDALSEEDRLKLEVAKSLREDYLQQNAFHDVDTYAPLNKQYRMLKAVLQFGDEARKALESGVYLKDILNLPVRDKIARAKYIDEKDILSIDEISKELTKDIEDLISKGGILDA.

233 to 240 (GPFGSGKT) contributes to the ATP binding site.

This sequence belongs to the ATPase alpha/beta chains family.

The catalysed reaction is ATP + H2O + 4 H(+)(in) = ADP + phosphate + 5 H(+)(out). In terms of biological role, produces ATP from ADP in the presence of a proton gradient across the membrane. The V-type alpha chain is a catalytic subunit. This Clostridium tetani (strain Massachusetts / E88) protein is V-type ATP synthase alpha chain 1.